A 256-amino-acid chain; its full sequence is Cell division protein FtsQ (256 aa).

Over 1–23 (MIKAVKMNTSFDKEKVRKHLPGA) the chain is Cytoplasmic. A helical membrane pass occupies residues 24–44 (IFLSLVVITSLWLVISTISWM). Residues 45–256 (TDEDRLPLSH…SDDVENKEEN (212 aa)) are Periplasmic-facing. The region spanning 50-120 (LPLSHMIIQG…ETIKVFVVEH (71 aa)) is the POTRA domain.

The protein belongs to the FtsQ/DivIB family. FtsQ subfamily. Part of a complex composed of FtsB, FtsL and FtsQ.

Its subcellular location is the cell inner membrane. Functionally, essential cell division protein. May link together the upstream cell division proteins, which are predominantly cytoplasmic, with the downstream cell division proteins, which are predominantly periplasmic. May control correct divisome assembly. This chain is Cell division protein FtsQ, found in Aliivibrio fischeri (strain ATCC 700601 / ES114) (Vibrio fischeri).